A 1383-amino-acid polypeptide reads, in one-letter code: DNA-directed RNA polymerase subunit beta (1383 aa).

The protein belongs to the RNA polymerase beta chain family. The RNAP catalytic core consists of 2 alpha, 1 beta, 1 beta' and 1 omega subunit. When a sigma factor is associated with the core the holoenzyme is formed, which can initiate transcription.

It catalyses the reaction RNA(n) + a ribonucleoside 5'-triphosphate = RNA(n+1) + diphosphate. In terms of biological role, DNA-dependent RNA polymerase catalyzes the transcription of DNA into RNA using the four ribonucleoside triphosphates as substrates. The sequence is that of DNA-directed RNA polymerase subunit beta from Xanthomonas axonopodis pv. citri (strain 306).